The primary structure comprises 144 residues: Large ribosomal subunit protein uL13 (144 aa).

The protein belongs to the universal ribosomal protein uL13 family. Part of the 50S ribosomal subunit.

Functionally, this protein is one of the early assembly proteins of the 50S ribosomal subunit, although it is not seen to bind rRNA by itself. It is important during the early stages of 50S assembly. This chain is Large ribosomal subunit protein uL13, found in Lawsonia intracellularis (strain PHE/MN1-00).